Here is a 341-residue protein sequence, read N- to C-terminus: Paired box protein Pax-9 (341 aa).

The segment at residues 4–130 (AFGEVNQLGG…SSISRILRNK (127 aa)) is a DNA-binding region (paired). The PAI subdomain stretch occupies residues 7–63 (EVNQLGGVFVNGRPLPNAIRLRIVELAQLGIRPCDISRQLRVSHGCVSKILARYNET). The segment at 82-130 (TVVKHIRTYKQRDPGIFAWEIRDRLLADGVCDKYNVPSVSSISRILRNK) is RED subdomain. The segment at 168 to 189 (AAAAKVPTPPGVPAIPGSVAMP) is interaction with KDM5B.

Interacts with KDM5B.

The protein localises to the nucleus. Its function is as follows. Transcription factor required for normal development of thymus, parathyroid glands, ultimobranchial bodies, teeth, skeletal elements of skull and larynx as well as distal limbs. The chain is Paired box protein Pax-9 (PAX9) from Perodicticus potto edwarsi (Potto).